A 395-amino-acid polypeptide reads, in one-letter code: RNA polymerase II elongation factor ELL3 (395 aa).

Disordered stretches follow at residues 124–149 (SSLQRHNRTEDARDRESWQNVGDYPE), 163–182 (VPDPLASSQGQSLPGSSREH), 194–218 (LPNRDPDQALPPSASQKHVDKKRPA), and 233–279 (LAPS…SLSP). Residues 130-140 (NRTEDARDRES) are compositionally biased toward basic and acidic residues. Positions 168–177 (ASSQGQSLPG) are enriched in polar residues. Residues 246 to 258 (LQEEDWEQEDKDE) are compositionally biased toward acidic residues. Positions 268–277 (PSVQADSESL) are enriched in polar residues. An OCEL domain is found at 283–393 (PDYLLQYRAI…LILEFEEKNR (111 aa)).

This sequence belongs to the ELL/occludin family. As to quaternary structure, interacts with AFF4. Component of the super elongation complex (SEC), at least composed of EAF1, EAF2, CDK9, MLLT3/AF9, AFF (AFF1 or AFF4), the P-TEFb complex and ELL (ELL, ELL2 or ELL3). Component of the little elongation complex (LEC), at least composed of ELL (ELL, ELL2 or ELL3), ZC3H8, ICE1 and ICE2.

Its subcellular location is the nucleus. In terms of biological role, enhancer-binding elongation factor that specifically binds enhancers in embryonic stem cells (ES cells), marks them, and is required for their future activation during stem cell specification. Elongation factor component of the super elongation complex (SEC), a complex required to increase the catalytic rate of RNA polymerase II transcription by suppressing transient pausing by the polymerase at multiple sites along the DNA. Component of the little elongation complex (LEC), a complex required to regulate small nuclear RNA (snRNA) gene transcription by RNA polymerase II and III. Does not only bind to enhancer regions of active genes, but also marks the enhancers that are in a poised or inactive state in ES cells and is required for establishing proper RNA polymerase II occupancy at developmentally regulated genes in a cohesin-dependent manner. Probably required for priming developmentally regulated genes for later recruitment of the super elongation complex (SEC), for transcriptional activation during differentiation. Required for recruitment of P-TEFb within SEC during differentiation. Probably preloaded on germ cell chromatin, suggesting that it may prime gene activation by marking enhancers as early as in the germ cells. Promoting epithelial-mesenchymal transition (EMT). This Bos taurus (Bovine) protein is RNA polymerase II elongation factor ELL3 (ELL3).